The chain runs to 164 residues: Dynein regulatory complex protein 8 (164 aa).

EF-hand domains follow at residues Glu-16 to Cys-51 and Ala-94 to Pro-129.

This sequence belongs to the DRC8 family. As to quaternary structure, component of the nexin-dynein regulatory complex (N-DRC).

Its subcellular location is the cytoplasm. It is found in the cytoskeleton. The protein resides in the flagellum axoneme. Functionally, component of the nexin-dynein regulatory complex (N-DRC), a key regulator of ciliary/flagellar motility which maintains the alignment and integrity of the distal axoneme and regulates microtubule sliding in motile axonemes. In Mus musculus (Mouse), this protein is Dynein regulatory complex protein 8 (Efcab2).